Reading from the N-terminus, the 279-residue chain is tRNA (guanine-N(1)-)-methyltransferase (279 aa).

S-adenosyl-L-methionine is bound by residues Gly-132 and 152–157; that span reads IGDYVL.

This sequence belongs to the RNA methyltransferase TrmD family. Homodimer.

Its subcellular location is the cytoplasm. The enzyme catalyses guanosine(37) in tRNA + S-adenosyl-L-methionine = N(1)-methylguanosine(37) in tRNA + S-adenosyl-L-homocysteine + H(+). Its function is as follows. Specifically methylates guanosine-37 in various tRNAs. The polypeptide is tRNA (guanine-N(1)-)-methyltransferase (Saccharophagus degradans (strain 2-40 / ATCC 43961 / DSM 17024)).